The chain runs to 166 residues: NADH-quinone oxidoreductase subunit E (166 aa).

The [2Fe-2S] cluster site is built by C92, C97, C133, and C137.

Belongs to the complex I 24 kDa subunit family. In terms of assembly, composed of 13 different subunits. Subunits NuoCD, E, F, and G constitute the peripheral sector of the complex. [2Fe-2S] cluster serves as cofactor.

It carries out the reaction a quinone + NADH + 5 H(+)(in) = a quinol + NAD(+) + 4 H(+)(out). NDH-1 shuttles electrons from NADH, via FMN and iron-sulfur (Fe-S) centers, to quinones in the respiratory chain. The immediate electron acceptor for the enzyme in this species is believed to be ubiquinone. Couples the redox reaction to proton translocation (for every two electrons transferred, four hydrogen ions are translocated across the cytoplasmic membrane), and thus conserves the redox energy in a proton gradient. The protein is NADH-quinone oxidoreductase subunit E (nuoE) of Salmonella typhi.